A 477-amino-acid polypeptide reads, in one-letter code: C4-dicarboxylate transport protein 1 (477 aa).

Helical transmembrane passes span 21 to 39, 59 to 76, 89 to 111, 162 to 179, 200 to 221, 231 to 253, 342 to 364, and 368 to 387; these read PYVQVLVAILLGVAVGHFY, MIIAPVIFLTVSTGIAGM, AMVYFVTFSTLALIVGLIVGNVI, ILQVLFFSVLFGIALAMV, LVGILMKAAPIGAFGAMAFTIG, LAMLVGTFYLTAFLFVFGVLGAV, VLLLLVAMLSSKGAAGVTGAGFV, and ATLSVVPAVPVAGMALILGV. Positions 435-477 are disordered; it reads SAGQPLITPAPSNSAASLPVESPGWSQTPDDRAAGSKQTLAGR.

The protein belongs to the dicarboxylate/amino acid:cation symporter (DAACS) (TC 2.A.23) family.

It is found in the cell inner membrane. In terms of biological role, responsible for the transport of dicarboxylates such as succinate, fumarate, and malate from the periplasm across the membrane. This transport system plays an important role in the energy supply of rhizobium-legume symbionts. In Mesorhizobium japonicum (strain LMG 29417 / CECT 9101 / MAFF 303099) (Mesorhizobium loti (strain MAFF 303099)), this protein is C4-dicarboxylate transport protein 1 (dctA1).